A 99-amino-acid chain; its full sequence is Signal recognition particle 19 kDa protein (99 aa).

This sequence belongs to the SRP19 family. As to quaternary structure, part of the signal recognition particle protein translocation system, which is composed of SRP and FtsY. Archaeal SRP consists of a 7S RNA molecule of 300 nucleotides and two protein subunits: SRP54 and SRP19.

The protein localises to the cytoplasm. In terms of biological role, involved in targeting and insertion of nascent membrane proteins into the cytoplasmic membrane. Binds directly to 7S RNA and mediates binding of the 54 kDa subunit of the SRP. This Pyrococcus horikoshii (strain ATCC 700860 / DSM 12428 / JCM 9974 / NBRC 100139 / OT-3) protein is Signal recognition particle 19 kDa protein.